A 227-amino-acid polypeptide reads, in one-letter code: Threonine--tRNA ligase (227 aa).

The segment at 1–120 (DIELKLSTRP…LIEHYEGAFP (120 aa)) is catalytic.

It belongs to the class-II aminoacyl-tRNA synthetase family. Homodimer.

The protein localises to the cytoplasm. It carries out the reaction tRNA(Thr) + L-threonine + ATP = L-threonyl-tRNA(Thr) + AMP + diphosphate + H(+). In terms of biological role, catalyzes the attachment of threonine to tRNA(Thr) in a two-step reaction: L-threonine is first activated by ATP to form Thr-AMP and then transferred to the acceptor end of tRNA(Thr). Also edits incorrectly charged L-seryl-tRNA(Thr). The sequence is that of Threonine--tRNA ligase from Pseudomonas syringae pv. syringae.